Consider the following 615-residue polypeptide: Filament-like plant protein 3 (615 aa).

Residues 1–18 (MDRRSWLWRRKSSEKSPG) are compositionally biased toward basic and acidic residues. The disordered stretch occupies residues 1-55 (MDRRSWLWRRKSSEKSPGETESTGSVSSHSERFSDDQRSQSPELNSKPVTREEEA). A compositionally biased stretch (polar residues) spans 19 to 28 (ETESTGSVSS). Residues 29–38 (HSERFSDDQR) show a composition bias toward basic and acidic residues. Positions 39–48 (SQSPELNSKP) are enriched in polar residues. Coiled coils occupy residues 87–121 (AEEAVSGWEKAENEAAALKQQLDASTSKVSALEDR) and 148–211 (EEAI…KSEE). Disordered stretches follow at residues 258-289 (DNSSDLKSSIDNQSDYSGRVSFSDNEMQSPSE) and 319-343 (PHSEPGRKHSESNKELEKSNAHVNQ). Residues 262–288 (DLKSSIDNQSDYSGRVSFSDNEMQSPS) are compositionally biased toward polar residues. Over residues 322–343 (EPGRKHSESNKELEKSNAHVNQ) the composition is skewed to basic and acidic residues. Residues 327 to 563 (HSESNKELEK…KQELEHHQET (237 aa)) adopt a coiled-coil conformation.

Belongs to the FPP family. In terms of assembly, interacts with WPP/MAF proteins. Binds to COG2; this interaction promotes the association between cortical microtubules and EXO70A1. Accumulates in preferentially xylem cells.

The protein localises to the vesicle. Its function is as follows. Ensures, when in complex with COG2 and FPP2/VETH2, the correct secondary cell wall (SCW) deposition pattern by recruiting exocyst components to cortical microtubules in xylem cells during secondary cell wall deposition by recruiting EXO70A1. This Arabidopsis thaliana (Mouse-ear cress) protein is Filament-like plant protein 3.